The primary structure comprises 304 residues: Polyisoprenyl-teichoic acid--peptidoglycan teichoic acid transferase TagU (304 aa).

Residues 1-4 (MKKK) lie on the Cytoplasmic side of the membrane. A helical; Signal-anchor for type II membrane protein membrane pass occupies residues 5–25 (ILFWILGIIGIMIIGGGVYAY). The Extracellular portion of the chain corresponds to 26 to 304 (NVYSSVSKTL…KLRAHLELTK (279 aa)).

It belongs to the LytR/CpsA/Psr (LCP) family.

The protein localises to the cell membrane. It participates in cell wall biogenesis. In terms of biological role, may catalyze the final step in cell wall teichoic acid biosynthesis, the transfer of the anionic cell wall polymers (APs) from their lipid-linked precursor to the cell wall peptidoglycan (PG). In Bacillus mycoides (strain KBAB4) (Bacillus weihenstephanensis), this protein is Polyisoprenyl-teichoic acid--peptidoglycan teichoic acid transferase TagU.